The sequence spans 284 residues: Diaminopimelate epimerase (284 aa).

Residues Asn20, Gln53, and Asn73 each contribute to the substrate site. The active-site Proton donor is the Cys82. Substrate contacts are provided by residues Gly83–Asn84, Asn167, Asn200, and Glu218–Arg219. Catalysis depends on Cys227, which acts as the Proton acceptor. Gly228–Ser229 serves as a coordination point for substrate.

The protein belongs to the diaminopimelate epimerase family. As to quaternary structure, homodimer.

Its subcellular location is the cytoplasm. The enzyme catalyses (2S,6S)-2,6-diaminopimelate = meso-2,6-diaminopimelate. It functions in the pathway amino-acid biosynthesis; L-lysine biosynthesis via DAP pathway; DL-2,6-diaminopimelate from LL-2,6-diaminopimelate: step 1/1. Its function is as follows. Catalyzes the stereoinversion of LL-2,6-diaminopimelate (L,L-DAP) to meso-diaminopimelate (meso-DAP), a precursor of L-lysine and an essential component of the bacterial peptidoglycan. The chain is Diaminopimelate epimerase from Xylella fastidiosa (strain M23).